Reading from the N-terminus, the 352-residue chain is S-adenosylmethionine:tRNA ribosyltransferase-isomerase (352 aa).

This sequence belongs to the QueA family. Monomer.

The protein localises to the cytoplasm. The catalysed reaction is 7-aminomethyl-7-carbaguanosine(34) in tRNA + S-adenosyl-L-methionine = epoxyqueuosine(34) in tRNA + adenine + L-methionine + 2 H(+). Its pathway is tRNA modification; tRNA-queuosine biosynthesis. Functionally, transfers and isomerizes the ribose moiety from AdoMet to the 7-aminomethyl group of 7-deazaguanine (preQ1-tRNA) to give epoxyqueuosine (oQ-tRNA). In Paraburkholderia xenovorans (strain LB400), this protein is S-adenosylmethionine:tRNA ribosyltransferase-isomerase.